We begin with the raw amino-acid sequence, 49 residues long: Large ribosomal subunit protein bL33 (49 aa).

It belongs to the bacterial ribosomal protein bL33 family.

The polypeptide is Large ribosomal subunit protein bL33 (Desulfitobacterium hafniense (strain Y51)).